The following is a 274-amino-acid chain: Diaminopimelate epimerase (274 aa).

Substrate is bound by residues asparagine 11, glutamine 44, and asparagine 64. The Proton donor role is filled by cysteine 73. Residues glycine 74–asparagine 75, asparagine 157, asparagine 190, and glutamate 208–arginine 209 each bind substrate. The active-site Proton acceptor is the cysteine 217. Residue glycine 218–serine 219 participates in substrate binding.

The protein belongs to the diaminopimelate epimerase family. Homodimer.

The protein resides in the cytoplasm. The catalysed reaction is (2S,6S)-2,6-diaminopimelate = meso-2,6-diaminopimelate. It functions in the pathway amino-acid biosynthesis; L-lysine biosynthesis via DAP pathway; DL-2,6-diaminopimelate from LL-2,6-diaminopimelate: step 1/1. Functionally, catalyzes the stereoinversion of LL-2,6-diaminopimelate (L,L-DAP) to meso-diaminopimelate (meso-DAP), a precursor of L-lysine and an essential component of the bacterial peptidoglycan. The protein is Diaminopimelate epimerase of Proteus mirabilis (strain HI4320).